The following is a 549-amino-acid chain: RNA-induced transcriptional silencing complex protein tas3 (549 aa).

Disordered stretches follow at residues 89–111 (KNSPAKAKATHTSSGVTKEVRAS), 126–184 (DGKE…SDSI), 202–225 (IRSSDSKSVGWDDNSTGFRESSKS), 298–361 (LDNF…HLEK), and 381–430 (AHFH…PLAS). Positions 298–307 (LDNFNRPSQQ) are enriched in polar residues. 2 stretches are compositionally biased toward basic and acidic residues: residues 328–361 (YDSYHPDSRSDSYRSKREHYDNRDTGPRSKHLEK) and 403–416 (SDRQRESRENELPT). Residues 419-430 (LNASDSHNPLAS) show a composition bias toward polar residues.

In terms of assembly, ago1, chp1 and tas3 interact to form the core of the RNA-induced transcriptional silencing (RITS) complex. The RITS complex interacts with the RDRC complex via interaction between ago1 and hrr1. Clr4 has a role in mediating this interaction.

The protein resides in the nucleus. It localises to the cytoplasm. The protein localises to the cytoskeleton. Its subcellular location is the microtubule organizing center. It is found in the spindle pole body. In terms of biological role, has a role in the RNA interference (RNAi) pathway which is important for heterochromatin formation and accurate chromosome segregation. A member of the RNA-induced transcriptional silencing (RITS) complex which is involved in the biosynthesis of dsRNA from primer siRNAs provided by the RNA-directed RNA polymerase (RDRC) complex. This Schizosaccharomyces pombe (strain 972 / ATCC 24843) (Fission yeast) protein is RNA-induced transcriptional silencing complex protein tas3 (tas3).